An 84-amino-acid polypeptide reads, in one-letter code: Toxin Tst1 (84 aa).

Residues 1-19 (MKGMILFISCLLLIDIVVG) form the signal peptide. In terms of domain architecture, LCN-type CS-alpha/beta spans 21 to 82 (KEGYLMDHEG…VWDRATNKCG (62 aa)). 4 disulfides stabilise this stretch: Cys-31–Cys-81, Cys-35–Cys-57, Cys-43–Cys-62, and Cys-47–Cys-64. Cys-81 bears the Cysteine amide mark.

In terms of tissue distribution, expressed by the venom gland.

The protein localises to the secreted. Beta toxins bind voltage-independently at site-4 of sodium channels (Nav) and shift the voltage of activation toward more negative potentials thereby affecting sodium channel activation and promoting spontaneous and repetitive firing. This toxin is active only on mammals. Is toxic to mice. The polypeptide is Toxin Tst1 (Tityus stigmurus (Brazilian scorpion)).